Here is a 1936-residue protein sequence, read N- to C-terminus: Potassium channel K1 (1936 aa).

Helical transmembrane passes span 175–195, 598–618, 643–663, 670–690, 701–721, and 734–754; these read IIIL…YILL, VWII…LWAA, GYIE…GLYF, YIFS…SFIM, TYWF…AEST, and IIII…SGIM. The pore-forming intramembrane region spans 772-788; that stretch reads FVYFGVITMSTVGYGDY. The helical transmembrane segment at 791–811 threads the bilayer; it reads VTPAGKCLTMFIIVTCFTFVG. The stretch at 1141–1185 forms a coiled coil; it reads DTSSMINYKSKSRVNYKMVKGTKNEFIRNQNYNINSIYYANNDNM.

It localises to the membrane. The catalysed reaction is K(+)(in) = K(+)(out). Its activity is regulated as follows. Partially inhibited by Ba(2+) and quinine. Probably insensitive to tetraethylammonium (TEA). Functionally, likely a predominant potassium channel in the erythrocytic stages of parasites. Mediates transmembrane potassium transport. Required for the development of oocysts in the mosquito midgut. The polypeptide is Potassium channel K1 (Plasmodium berghei (strain Anka)).